Here is a 312-residue protein sequence, read N- to C-terminus: Tumor necrosis factor receptor type 1-associated DEATH domain protein (312 aa).

A Nuclear export signal motif is present at residues 147–163 (LRDEELTELENALRNLT). The segment at 166–200 (SAGGQGSDVQGTPAPLQSLAPSPPEEKPPPPQPGQ) is disordered. The region spanning 215–305 (NLQDQQKFAR…SLAEDLLGLA (91 aa)) is the Death domain. The interaction with KRT14 and KRT18 stretch occupies residues 222-289 (FARSVGLKWR…ATLQRLVEAL (68 aa)). Positions 231–244 (RKVGRSLQRSCRAL) match the Nuclear localization signal motif.

As to quaternary structure, stimulation of TNF-alpha receptor TNFRSF1A leads to the formation of two distinct signaling complexes. Plasma membrane-bound complex I is composed of TNFRSF1A, TRADD, RIPK1, TRAF2 and BIRC2/c-IAP1 or BIRC3 which interacts with CHUCK/IKK-alpha, IKBKB/IKK-beta and IKBKG/IKK-gamma promoting cell survival. Subsequently, TRADD, RIPK1 and TRAF2 dissociate from TNFRSF1A and form cytoplasmic complex II with FADD and caspase CASP8 promoting cell apoptosis. Within complex I, interacts with TNFRSF1A/TNFR1, TRAF2 and kinase RIPK1. Within complex I, interacts with TRPC4AP; the interaction promotes NF-kappa B activation. UXT1 associates with complex I; the interaction prevents the formation of complex II. Within complex I Interacts with scaffold protein DAB2IP. Interacts with autophagy receptor SQSTM1. Interacts with E3 ligase TRIP12. Interacts with kinase HIPK2. Interacts with keratin KRT14. Interacts with keratin KRT18. Interacts with keratins KRT16 and KRT17. Interacts with FADD. Interacts with TOMM70. Interacts with TMC8; the interaction impairs the formation of complex I and facilites complex II formation.

It localises to the nucleus. Its subcellular location is the cytoplasm. It is found in the cytoskeleton. In terms of biological role, adapter molecule for TNFRSF1A/TNFR1 that specifically associates with the cytoplasmic domain of activated TNFRSF1A/TNFR1 mediating its interaction with FADD. Overexpression of TRADD leads to two major TNF-induced responses, apoptosis and activation of NF-kappa-B. The nuclear form acts as a tumor suppressor by preventing ubiquitination and degradation of isoform p19ARF/ARF of CDKN2A by TRIP12: acts by interacting with TRIP12, leading to disrupt interaction between TRIP12 and isoform p19ARF/ARF of CDKN2A. This Bos taurus (Bovine) protein is Tumor necrosis factor receptor type 1-associated DEATH domain protein.